Here is an 86-residue protein sequence, read N- to C-terminus: Photosystem I reaction center subunit PsaK 1 (86 aa).

2 helical membrane-spanning segments follow: residues 14 to 34 (LSWSPKVAGVMIACNILAIAF) and 61 to 81 (AVLGTASFGHILGAGVILGLA).

This sequence belongs to the PsaG/PsaK family.

The protein localises to the cellular thylakoid membrane. The chain is Photosystem I reaction center subunit PsaK 1 (psaK1) from Synechocystis sp. (strain ATCC 27184 / PCC 6803 / Kazusa).